The sequence spans 373 residues: Queuine tRNA-ribosyltransferase (373 aa).

Aspartate 90 acts as the Proton acceptor in catalysis. Residues 90–94 (DSGGF), aspartate 144, glutamine 193, and glycine 220 each bind substrate. Residues 251–257 (GVGTPED) are RNA binding. Aspartate 270 acts as the Nucleophile in catalysis. The RNA binding; important for wobble base 34 recognition stretch occupies residues 275–279 (TRNAR). Residues cysteine 308, cysteine 310, cysteine 313, and histidine 339 each coordinate Zn(2+).

The protein belongs to the queuine tRNA-ribosyltransferase family. As to quaternary structure, homodimer. Within each dimer, one monomer is responsible for RNA recognition and catalysis, while the other monomer binds to the replacement base PreQ1. Requires Zn(2+) as cofactor.

It catalyses the reaction 7-aminomethyl-7-carbaguanine + guanosine(34) in tRNA = 7-aminomethyl-7-carbaguanosine(34) in tRNA + guanine. It functions in the pathway tRNA modification; tRNA-queuosine biosynthesis. Catalyzes the base-exchange of a guanine (G) residue with the queuine precursor 7-aminomethyl-7-deazaguanine (PreQ1) at position 34 (anticodon wobble position) in tRNAs with GU(N) anticodons (tRNA-Asp, -Asn, -His and -Tyr). Catalysis occurs through a double-displacement mechanism. The nucleophile active site attacks the C1' of nucleotide 34 to detach the guanine base from the RNA, forming a covalent enzyme-RNA intermediate. The proton acceptor active site deprotonates the incoming PreQ1, allowing a nucleophilic attack on the C1' of the ribose to form the product. After dissociation, two additional enzymatic reactions on the tRNA convert PreQ1 to queuine (Q), resulting in the hypermodified nucleoside queuosine (7-(((4,5-cis-dihydroxy-2-cyclopenten-1-yl)amino)methyl)-7-deazaguanosine). The polypeptide is Queuine tRNA-ribosyltransferase (Campylobacter jejuni (strain RM1221)).